Here is a 131-residue protein sequence, read N- to C-terminus: Small ribosomal subunit protein uS11 (131 aa).

Belongs to the universal ribosomal protein uS11 family. In terms of assembly, part of the 30S ribosomal subunit. Interacts with proteins S7 and S18. Binds to IF-3.

Its function is as follows. Located on the platform of the 30S subunit, it bridges several disparate RNA helices of the 16S rRNA. Forms part of the Shine-Dalgarno cleft in the 70S ribosome. This chain is Small ribosomal subunit protein uS11, found in Clostridium novyi (strain NT).